A 92-amino-acid polypeptide reads, in one-letter code: MARKCEITGKKTMFGNNVPRKGLAKKKGGAGQHIGVKTKRTFKVNLINKKFFIPELGRSINIKVSANALRSISKVGLDAFLKKNCKKIENFL.

This sequence belongs to the bacterial ribosomal protein bL28 family.

The polypeptide is Large ribosomal subunit protein bL28 (Borrelia garinii subsp. bavariensis (strain ATCC BAA-2496 / DSM 23469 / PBi) (Borreliella bavariensis)).